The sequence spans 792 residues: Phenylalanine--tRNA ligase beta subunit (792 aa).

Residues 38–148 (NTKLAGFIVA…DDYKVGNKFF (111 aa)) enclose the tRNA-binding domain. The region spanning 406–482 (EADTKVSFDY…RIYGYDKIKE (77 aa)) is the B5 domain. Mg(2+) is bound by residues D460, D466, E469, and E470. An FDX-ACB domain is found at 698-790 (YKHQSVKRDF…VHKNTGGILR (93 aa)).

The protein belongs to the phenylalanyl-tRNA synthetase beta subunit family. Type 1 subfamily. Tetramer of two alpha and two beta subunits. It depends on Mg(2+) as a cofactor.

The protein localises to the cytoplasm. The enzyme catalyses tRNA(Phe) + L-phenylalanine + ATP = L-phenylalanyl-tRNA(Phe) + AMP + diphosphate + H(+). The polypeptide is Phenylalanine--tRNA ligase beta subunit (Wolbachia sp. subsp. Brugia malayi (strain TRS)).